The chain runs to 184 residues: Putative NAD(P)H nitroreductase HI_1542 (184 aa).

Residues 10 to 12, R35, and H39 each bind FMN; that span reads RKS. 122–127 is an NAD(+) binding site; sequence AAQAQG. 132–134 serves as a coordination point for FMN; that stretch reads WIS.

It belongs to the nitroreductase family. As to quaternary structure, homodimer. FMN serves as cofactor.

In Haemophilus influenzae (strain ATCC 51907 / DSM 11121 / KW20 / Rd), this protein is Putative NAD(P)H nitroreductase HI_1542.